The sequence spans 428 residues: 3-phosphoshikimate 1-carboxyvinyltransferase (428 aa).

Positions 23, 24, and 28 each coordinate 3-phosphoshikimate. A phosphoenolpyruvate-binding site is contributed by K23. Phosphoenolpyruvate is bound by residues G97 and R125. S170, S171, Q172, S198, D314, N337, and K341 together coordinate 3-phosphoshikimate. Q172 lines the phosphoenolpyruvate pocket. D314 functions as the Proton acceptor in the catalytic mechanism. Positions 345, 387, and 412 each coordinate phosphoenolpyruvate.

This sequence belongs to the EPSP synthase family. As to quaternary structure, monomer.

Its subcellular location is the cytoplasm. The enzyme catalyses 3-phosphoshikimate + phosphoenolpyruvate = 5-O-(1-carboxyvinyl)-3-phosphoshikimate + phosphate. Its pathway is metabolic intermediate biosynthesis; chorismate biosynthesis; chorismate from D-erythrose 4-phosphate and phosphoenolpyruvate: step 6/7. Its function is as follows. Catalyzes the transfer of the enolpyruvyl moiety of phosphoenolpyruvate (PEP) to the 5-hydroxyl of shikimate-3-phosphate (S3P) to produce enolpyruvyl shikimate-3-phosphate and inorganic phosphate. The polypeptide is 3-phosphoshikimate 1-carboxyvinyltransferase (Edwardsiella ictaluri (strain 93-146)).